The primary structure comprises 254 residues: Cytochrome c oxidase subunit 2 (254 aa).

The Mitochondrial intermembrane portion of the chain corresponds to 1–37 (MNNILNFYPAVITTDVAENWQIGFQDPATPIMEGIIN). A helical transmembrane segment spans residues 38 to 58 (LHYDLMFFICVISVFVSWMLG). At 59–83 (RTLWHFEQNQNKIPSSLTHGTLIEM) the chain is on the mitochondrial matrix side. Residues 84–104 (IWTVTPAFILLIIAVPSFSLL) traverse the membrane as a helical segment. Topologically, residues 105 to 254 (YAMDEIISPA…VSWISNKLNE (150 aa)) are mitochondrial intermembrane. Cu cation is bound by residues His186, Cys221, Glu223, Cys225, His229, and Met232. Position 223 (Glu223) interacts with Mg(2+).

It belongs to the cytochrome c oxidase subunit 2 family. Component of the cytochrome c oxidase (complex IV, CIV), a multisubunit enzyme composed of a catalytic core of 3 subunits and several supernumerary subunits. The complex exists as a monomer or a dimer and forms supercomplexes (SCs) in the inner mitochondrial membrane with ubiquinol-cytochrome c oxidoreductase (cytochrome b-c1 complex, complex III, CIII). Cu cation serves as cofactor.

Its subcellular location is the mitochondrion inner membrane. It carries out the reaction 4 Fe(II)-[cytochrome c] + O2 + 8 H(+)(in) = 4 Fe(III)-[cytochrome c] + 2 H2O + 4 H(+)(out). Functionally, component of the cytochrome c oxidase, the last enzyme in the mitochondrial electron transport chain which drives oxidative phosphorylation. The respiratory chain contains 3 multisubunit complexes succinate dehydrogenase (complex II, CII), ubiquinol-cytochrome c oxidoreductase (cytochrome b-c1 complex, complex III, CIII) and cytochrome c oxidase (complex IV, CIV), that cooperate to transfer electrons derived from NADH and succinate to molecular oxygen, creating an electrochemical gradient over the inner membrane that drives transmembrane transport and the ATP synthase. Cytochrome c oxidase is the component of the respiratory chain that catalyzes the reduction of oxygen to water. Electrons originating from reduced cytochrome c in the intermembrane space (IMS) are transferred via the dinuclear copper A center (CU(A)) of subunit 2 and heme A of subunit 1 to the active site in subunit 1, a binuclear center (BNC) formed by heme A3 and copper B (CU(B)). The BNC reduces molecular oxygen to 2 water molecules using 4 electrons from cytochrome c in the IMS and 4 protons from the mitochondrial matrix. The chain is Cytochrome c oxidase subunit 2 (COX2) from Chondrus crispus (Carrageen Irish moss).